The sequence spans 1369 residues: DNA-directed RNA polymerase subunit beta (1369 aa).

Belongs to the RNA polymerase beta chain family. In terms of assembly, the RNAP catalytic core consists of 2 alpha, 1 beta, 1 beta' and 1 omega subunit. When a sigma factor is associated with the core the holoenzyme is formed, which can initiate transcription.

It catalyses the reaction RNA(n) + a ribonucleoside 5'-triphosphate = RNA(n+1) + diphosphate. Functionally, DNA-dependent RNA polymerase catalyzes the transcription of DNA into RNA using the four ribonucleoside triphosphates as substrates. The protein is DNA-directed RNA polymerase subunit beta of Solidesulfovibrio magneticus (strain ATCC 700980 / DSM 13731 / RS-1) (Desulfovibrio magneticus).